Consider the following 358-residue polypeptide: DNA polymerase IV (358 aa).

The region spanning 4 to 185 (IIHVDMDCFY…LPLIKIPGVG (182 aa)) is the UmuC domain. The Mg(2+) site is built by aspartate 8 and aspartate 103. Glutamate 104 is a catalytic residue.

The protein belongs to the DNA polymerase type-Y family. Monomer. The cofactor is Mg(2+).

The protein resides in the cytoplasm. The catalysed reaction is DNA(n) + a 2'-deoxyribonucleoside 5'-triphosphate = DNA(n+1) + diphosphate. Functionally, poorly processive, error-prone DNA polymerase involved in untargeted mutagenesis. Copies undamaged DNA at stalled replication forks, which arise in vivo from mismatched or misaligned primer ends. These misaligned primers can be extended by PolIV. Exhibits no 3'-5' exonuclease (proofreading) activity. May be involved in translesional synthesis, in conjunction with the beta clamp from PolIII. The polypeptide is DNA polymerase IV (Shewanella halifaxensis (strain HAW-EB4)).